The following is a 336-amino-acid chain: 4-hydroxy-2-oxovalerate aldolase (336 aa).

Residues Ile-5 to Met-255 enclose the Pyruvate carboxyltransferase domain. Arg-13 to Asp-14 provides a ligand contact to substrate. Residue Asp-14 participates in Mn(2+) binding. His-17 functions as the Proton acceptor in the catalytic mechanism. Ser-167 and His-194 together coordinate substrate. His-194 and His-196 together coordinate Mn(2+). Substrate is bound at residue Tyr-285.

It belongs to the 4-hydroxy-2-oxovalerate aldolase family.

It carries out the reaction (S)-4-hydroxy-2-oxopentanoate = acetaldehyde + pyruvate. This chain is 4-hydroxy-2-oxovalerate aldolase (mhpE), found in Carboxydothermus hydrogenoformans (strain ATCC BAA-161 / DSM 6008 / Z-2901).